Reading from the N-terminus, the 228-residue chain is Auxin-responsive protein IAA16 (228 aa).

The EAR-like (transcriptional repression) signature appears at 19–23 (LSLAL). Over residues 28–39 (SSSGLQGNTSTA) the composition is skewed to polar residues. Disordered regions lie at residues 28-57 (SSSG…PAAP) and 70-90 (NLAS…AAAA). The PB1 domain occupies 97 to 214 (ARFVKVNMDG…RVLRSSDLNA (118 aa)).

It belongs to the Aux/IAA family. As to quaternary structure, homodimers and heterodimers. In terms of tissue distribution, expressed in roots, flowers and seedlings.

Its subcellular location is the nucleus. In terms of biological role, aux/IAA proteins are short-lived transcriptional factors that function as repressors of early auxin response genes at low auxin concentrations. This is Auxin-responsive protein IAA16 (IAA16) from Oryza sativa subsp. japonica (Rice).